A 165-amino-acid polypeptide reads, in one-letter code: Probable cell wall protein PGA15 (165 aa).

Residues 1 to 16 form the signal peptide; the sequence is MKFIIILFTLISIVTA. The GPI-anchor amidated serine moiety is linked to residue Ser143. The propeptide at 144–165 is removed in mature form; the sequence is GAANYLTSFSIGTFFVFVLGLI.

Belongs to the IHD1 family. In terms of processing, the GPI-anchor is attached to the protein in the endoplasmic reticulum and serves to target the protein to the cell surface. There, the glucosamine-inositol phospholipid moiety is cleaved off and the GPI-modified mannoprotein is covalently attached via its lipidless GPI glycan remnant to the 1,6-beta-glucan of the outer cell wall layer.

It localises to the secreted. It is found in the cell wall. The protein resides in the membrane. In terms of biological role, probable GPI-anchored cell wall protein that may be involved in cell wall organization, hyphal growth, as well as in virulence. The chain is Probable cell wall protein PGA15 (PGA15) from Candida albicans (strain SC5314 / ATCC MYA-2876) (Yeast).